Here is a 307-residue protein sequence, read N- to C-terminus: Cytochrome c1 2, heme protein, mitochondrial (307 aa).

Residues 1-64 (MVGGGVIRQL…LLSFSTVASA (64 aa)) constitute a mitochondrion transit peptide. Topologically, residues 65 to 270 (DEAEHGLECP…EPEMEERKLM (206 aa)) are mitochondrial intermembrane. Residues 90 to 197 (ASIRRGHQVY…NGQNYVFALL (108 aa)) enclose the Cytochrome c domain. Heme c is bound by residues C103, C106, H107, and M226. Residues 271–288 (GFKWIFLLSLALLQAAYY) form a helical membrane-spanning segment. Over 289–307 (RRLKWSVLKSRKLVLDVVN) the chain is Mitochondrial matrix.

Belongs to the cytochrome c family. In terms of assembly, component of the ubiquinol-cytochrome c oxidoreductase (cytochrome b-c1 complex, complex III, CIII), a multisubunit enzyme composed of 10 subunits. The complex is composed of 3 respiratory subunits cytochrome b (MT-CYB), cytochrome c1 (CYC1-1 or CYC1-2) and Rieske protein (UCR1-1 or UCR1-2), 2 core protein subunits MPPalpha1 (or MPPalpha2) and MPPB, and 5 low-molecular weight protein subunits QCR7-1 (or QCR7-2), UCRQ-1 (or UCRQ-2), QCR9, UCRY and probably QCR6-1 (or QCR6-2). The complex exists as an obligatory dimer and forms supercomplexes (SCs) in the inner mitochondrial membrane with NADH-ubiquinone oxidoreductase (complex I, CI), resulting in different assemblies (supercomplexes SCI(1)III(2) and SCI(2)III(4)). Binds 1 heme c group covalently per subunit.

Its subcellular location is the mitochondrion inner membrane. Its function is as follows. Component of the ubiquinol-cytochrome c oxidoreductase, a multisubunit transmembrane complex that is part of the mitochondrial electron transport chain which drives oxidative phosphorylation. The respiratory chain contains 3 multisubunit complexes succinate dehydrogenase (complex II, CII), ubiquinol-cytochrome c oxidoreductase (cytochrome b-c1 complex, complex III, CIII) and cytochrome c oxidase (complex IV, CIV), that cooperate to transfer electrons derived from NADH and succinate to molecular oxygen, creating an electrochemical gradient over the inner membrane that drives transmembrane transport and the ATP synthase. The cytochrome b-c1 complex catalyzes electron transfer from ubiquinol to cytochrome c, linking this redox reaction to translocation of protons across the mitochondrial inner membrane, with protons being carried across the membrane as hydrogens on the quinol. In the process called Q cycle, 2 protons are consumed from the matrix, 4 protons are released into the intermembrane space and 2 electrons are passed to cytochrome c. Cytochrome c1 is a catalytic core subunit containing a c-type heme. It transfers electrons from the [2Fe-2S] iron-sulfur cluster of the Rieske protein to cytochrome c. The protein is Cytochrome c1 2, heme protein, mitochondrial (CYC1-2) of Arabidopsis thaliana (Mouse-ear cress).